We begin with the raw amino-acid sequence, 327 residues long: Arabinose 5-phosphate isomerase KpsF (327 aa).

The SIS domain occupies 48-191 (VLNLIMNCKG…AIAMIHQRKF (144 aa)). 63–68 (GMGKSG) is a binding site for ATP. Substrate is bound by residues 82–83 (GT), H89, H95, 121–130 (KLVPSLKNFG), and 155–157 (HMA). Zn(2+) is bound at residue H89. 2 CBS domains span residues 217–273 (MQHD…EGSL) and 282–327 (MTRE…RIFD).

Homotetramer.

The enzyme catalyses D-arabinose 5-phosphate = D-ribulose 5-phosphate. Its activity is regulated as follows. Inhibited by 10 uM zinc, cadmium or mercury ions. Involved in the biosynthesis of K-antigen capsules. Catalyzes the reversible aldol-ketol isomerization between D-ribulose 5-phosphate (Ru5P) and D-arabinose 5-phosphate (A5P). This is Arabinose 5-phosphate isomerase KpsF from Escherichia coli O6:H1 (strain CFT073 / ATCC 700928 / UPEC).